The primary structure comprises 810 residues: Leucine--tRNA ligase (810 aa).

A 'HIGH' region motif is present at residues 43-53 (PYPSGTLHIGH). The 'KMSKS' region signature appears at 578–582 (KMSKS). Lys581 serves as a coordination point for ATP.

Belongs to the class-I aminoacyl-tRNA synthetase family.

Its subcellular location is the cytoplasm. The enzyme catalyses tRNA(Leu) + L-leucine + ATP = L-leucyl-tRNA(Leu) + AMP + diphosphate. This Solibacter usitatus (strain Ellin6076) protein is Leucine--tRNA ligase.